We begin with the raw amino-acid sequence, 761 residues long: MVAMSEALVHARITLLQAWLRMLLFSSVWPPTWCAEYKGPPETVKPLRVIVSSKDMSLAGWMSYSLYFGGQRHIISMKSKNFLESRQLPVFTYNDQGVLFEDRPFVQNDCYYLGFVDGDLESMAALTTCFGGFQGILQINDTAYEIKPKSPSSTFEHLLYKIDSEKTQLRPMRCGLTDEEIAGQVRLQENGKSTRMQSIYGSWWSHGLYIKLALVIDHEQYLYRKKNTSLVIRDVLSIMQGINLFLLSVDINVVLLGLTIWTNGNPIPVQDIYALLPAFCTWKGTNLDSQIPYDIAHLFVNYTFSNYFGIAYVGTVCDKTFGCGIDSIAEDDFLTIGHIVAHEIGHNLGMSHDGILCTCGEESCLMSATMDSSQKLSNCSYEVLWAHMINKSCIHREPRPSDIFQLKVCGNGIVEEGEQCDCGSSENCRRNRCCMPSCTLRSKAKCDTGLCCNRKCQIQPSGTLCRARENECDLPEWCNGTSHECPEDLFVQDGTSCPGDGYCYEKRCNSHDVHCQRVFGQLAMKASDSCYKELNTRGDRFGNCGFINNEYVRCEISDILCGRIQCDKVGTLPILQNHYTIHWTHFNSVSCWSTDYHLGMKIADLGDIKDGTNCGPQHVCIARKCVNKPSWVNDCTPETCNMKGVCNNKQHCHCDVGWSPPNCQETGTGGSIDSGSPGNEVYEDEVVSKKDAPEKPNVIIWLLPIICVAVVLSVLFCLSGATKKSREAAASQPAEERVKPPYEGAEPSYETVKPPDEWANP.

The first 34 residues, 1–34 (MVAMSEALVHARITLLQAWLRMLLFSSVWPPTWC), serve as a signal peptide directing secretion. Residues 35 to 200 (AEYKGPPETV…GKSTRMQSIY (166 aa)) constitute a propeptide that is removed on maturation. Residues 35–697 (AEYKGPPETV…SKKDAPEKPN (663 aa)) are Extracellular-facing. A glycan (N-linked (GlcNAc...) asparagine) is linked at asparagine 140. A Cysteine switch motif is present at residues 172–179 (MRCGLTDE). Cysteine 174 contributes to the Zn(2+) binding site. The Peptidase M12B domain occupies 208–400 (LYIKLALVID…KSCIHREPRP (193 aa)). Asparagine 227 and asparagine 301 each carry an N-linked (GlcNAc...) asparagine glycan. Cystine bridges form between cysteine 323/cysteine 393, cysteine 357/cysteine 379, cysteine 359/cysteine 364, cysteine 465/cysteine 485, cysteine 635/cysteine 646, cysteine 640/cysteine 652, and cysteine 654/cysteine 663. Histidine 342 contacts Zn(2+). Glutamate 343 is an active-site residue. 2 residues coordinate Zn(2+): histidine 346 and histidine 352. Asparagine 378, asparagine 390, and asparagine 479 each carry an N-linked (GlcNAc...) asparagine glycan. One can recognise a Disintegrin domain in the interval 406 to 493 (LKVCGNGIVE…ECPEDLFVQD (88 aa)). The 34-residue stretch at 631–664 (WVNDCTPETCNMKGVCNNKQHCHCDVGWSPPNCQ) folds into the EGF-like domain. A helical membrane pass occupies residues 698-718 (VIIWLLPIICVAVVLSVLFCL). Topologically, residues 719 to 761 (SGATKKSREAAASQPAEERVKPPYEGAEPSYETVKPPDEWANP) are cytoplasmic. Residues 725–761 (SREAAASQPAEERVKPPYEGAEPSYETVKPPDEWANP) are disordered.

As to quaternary structure, monomer. Requires Zn(2+) as cofactor. In terms of processing, the prodomain is removed during sperm passage through the caput epididymis after the protein has reached the cell surface. Not processed in the secretory pathway. As to expression, expressed exclusively in testis and more specifically on the surface of mature sperm (at protein level).

It localises to the membrane. Plasma membrane protease present on mature sperm that may be involved in sperm function during epididymal maturation and/or fertilization. This chain is Disintegrin and metalloproteinase domain-containing protein 24, found in Mus musculus (Mouse).